Consider the following 501-residue polypeptide: Myosin heavy chain, embryonic smooth muscle isoform (501 aa).

Positions 1 to 457 (REAREKETKA…TLKNRLRRGG (457 aa)) form a coiled coil. The segment at 1–501 (REAREKETKA…VNETQPPQSE (501 aa)) is rodlike tail (S2 and LMM domains). 3 disordered regions span residues 182 to 202 (YQRELEEARGSRDEIFAQSKE), 221 to 254 (LASSERARRHAEQERDELADEIANSASGKSALLD), and 397 to 501 (MEKA…PQSE). Residues 223–233 (SSERARRHAEQ) are compositionally biased toward basic and acidic residues. Residues 492-501 (VNETQPPQSE) show a composition bias toward polar residues.

Muscle myosin is a hexameric protein that consists of 2 heavy chain subunits (MHC), 2 alkali light chain subunits (MLC) and 2 regulatory light chain subunits (MLC-2).

It is found in the cytoplasm. The protein resides in the myofibril. Muscle contraction. This chain is Myosin heavy chain, embryonic smooth muscle isoform, found in Oryctolagus cuniculus (Rabbit).